The chain runs to 110 residues: MPLLHTLGLFALTAVAEIVGCYLPYLWLKQGHSAWLLVPAALSLAVFAWLLTLHPTASGRVYAAYGGVYVSMALLWLWAVDGVRPATTDWAGVGLCLAGMALIMAGPRHG.

The next 4 membrane-spanning stretches (helical) occupy residues 7-27 (LGLF…PYLW), 33-53 (SAWL…LLTL), 63-83 (AAYG…VDGV), and 86-106 (ATTD…IMAG).

The protein belongs to the UPF0060 family.

Its subcellular location is the cell inner membrane. The polypeptide is UPF0060 membrane protein Bpet0062 (Bordetella petrii (strain ATCC BAA-461 / DSM 12804 / CCUG 43448)).